Consider the following 171-residue polypeptide: Skp-like protein (171 aa).

Residues 1–21 (MKKLLFSTFLLVLGSTSAAHA) form the signal peptide.

The protein belongs to the Skp family.

This chain is Skp-like protein, found in Chlamydia pneumoniae (Chlamydophila pneumoniae).